Consider the following 473-residue polypeptide: 3-isopropylmalate dehydratase large subunit (473 aa).

[4Fe-4S] cluster-binding residues include Cys-354, Cys-414, and Cys-417.

This sequence belongs to the aconitase/IPM isomerase family. LeuC type 1 subfamily. In terms of assembly, heterodimer of LeuC and LeuD. Requires [4Fe-4S] cluster as cofactor.

The catalysed reaction is (2R,3S)-3-isopropylmalate = (2S)-2-isopropylmalate. It participates in amino-acid biosynthesis; L-leucine biosynthesis; L-leucine from 3-methyl-2-oxobutanoate: step 2/4. In terms of biological role, catalyzes the isomerization between 2-isopropylmalate and 3-isopropylmalate, via the formation of 2-isopropylmaleate. This chain is 3-isopropylmalate dehydratase large subunit, found in Mycobacterium tuberculosis (strain CDC 1551 / Oshkosh).